We begin with the raw amino-acid sequence, 146 residues long: Hemoglobin subunit beta-1 (146 aa).

A Globin domain is found at 2–146 (HWTAEEKQLI…VAHALARRYH (145 aa)). Residues H63 and H92 each coordinate heme b.

Belongs to the globin family. As to quaternary structure, heterotetramer of two alpha chains and two beta chains. Red blood cells.

Involved in oxygen transport from the lung to the various peripheral tissues. The chain is Hemoglobin subunit beta-1 (HBB1) from Iguana iguana (Common iguana).